The sequence spans 174 residues: MAKQQSKRPQAADERDDGLREKMVAINRVTKVVKGGRILGFAALTVVGDGDGGVGMGKGKSREVPVAVQKAMDEARRKLKKISLKNGTLQHAIVGKHGAASVLMQPAPSGTGIIAGGPMRAVFEVMGVTDVTCKCLGSANPYNVVRATLNGLLAINTPAEIAAKRGKSVEEILG.

The region spanning 19 to 82 is the S5 DRBM domain; sequence LREKMVAINR…DEARRKLKKI (64 aa).

This sequence belongs to the universal ribosomal protein uS5 family. Part of the 30S ribosomal subunit. Contacts proteins S4 and S8.

With S4 and S12 plays an important role in translational accuracy. In terms of biological role, located at the back of the 30S subunit body where it stabilizes the conformation of the head with respect to the body. This Aromatoleum aromaticum (strain DSM 19018 / LMG 30748 / EbN1) (Azoarcus sp. (strain EbN1)) protein is Small ribosomal subunit protein uS5.